The primary structure comprises 279 residues: Bifunctional protein FolD (279 aa).

Residues 165–167 (GRS), serine 190, and isoleucine 231 each bind NADP(+).

This sequence belongs to the tetrahydrofolate dehydrogenase/cyclohydrolase family. Homodimer.

It carries out the reaction (6R)-5,10-methylene-5,6,7,8-tetrahydrofolate + NADP(+) = (6R)-5,10-methenyltetrahydrofolate + NADPH. It catalyses the reaction (6R)-5,10-methenyltetrahydrofolate + H2O = (6R)-10-formyltetrahydrofolate + H(+). The protein operates within one-carbon metabolism; tetrahydrofolate interconversion. In terms of biological role, catalyzes the oxidation of 5,10-methylenetetrahydrofolate to 5,10-methenyltetrahydrofolate and then the hydrolysis of 5,10-methenyltetrahydrofolate to 10-formyltetrahydrofolate. This chain is Bifunctional protein FolD, found in Halalkalibacterium halodurans (strain ATCC BAA-125 / DSM 18197 / FERM 7344 / JCM 9153 / C-125) (Bacillus halodurans).